The sequence spans 482 residues: Programmed cell death protein 7 (482 aa).

2 disordered regions span residues 1–136 (MALP…GDAA) and 151–170 (GNPR…GPSL). Over residues 13-48 (GPPPPQPPPSAPFGCPPPPLPSPAFPPPLPQRPGPF) the composition is skewed to pro residues. The segment covering 49–71 (PGASAPFLQPPLALQPRAPAEAS) has biased composition (low complexity). Pro residues-rich tracts occupy residues 82 to 100 (PVPP…PFPG) and 109 to 130 (PPPP…PPPD). Low complexity predominate over residues 151–168 (GNPRRPGGLRTPRTPAGP). Positions 233–408 (EARRRLERVR…LQKREIESKL (176 aa)) form a coiled coil.

Interacts with RBM40. Component of the U11/U12 snRNPs that are part of the U12-type spliceosome. Highly expressed in testis, thymus and lymph nodes. Detected at low levels in embryonic stem cells.

Its subcellular location is the nucleus. In terms of biological role, promotes apoptosis when overexpressed. This is Programmed cell death protein 7 (Pdcd7) from Mus musculus (Mouse).